We begin with the raw amino-acid sequence, 34 residues long: Delta-conotoxin AtVIA (34 aa).

Positions 1–4 (LSKK) are excised as a propeptide. Gln-5 is subject to Pyrrolidone carboxylic acid. Cystine bridges form between Cys-6-Cys-23, Cys-13-Cys-27, and Cys-22-Cys-31.

As to expression, expressed by the venom duct.

Its subcellular location is the secreted. Probable toxin from a worm-hunter cone snail. Shows an excitatory activity on a majority of mouse lumbar dorsal root ganglion (DRG) neurons. Very probably inhibits the inactivation of voltage-gated sodium channels (Nav). The chain is Delta-conotoxin AtVIA from Conus ateralbus (Cone snail).